The chain runs to 707 residues: E3 ubiquitin-protein ligase Praja-2 (707 aa).

Basic and acidic residues predominate over residues 1–10 (MSQYTEKEPS). Disordered stretches follow at residues 1–32 (MSQY…QTIT), 72–120 (PKEN…PSIA), and 250–314 (QNGQ…VRPK). Position 2 is an N-acetylserine (Ser2). Composition is skewed to polar residues over residues 74-83 (ENTSGSSSLD) and 109-119 (LNQSTESSPSI). Residues 257–276 (RSSEDGVVRKRRQDDTDQGR) are compositionally biased toward basic and acidic residues. Residues 293 to 308 (EQNTSDRANHHGSSPE) are compositionally biased toward polar residues. Ser306 and Ser320 each carry phosphoserine. Ser339 is modified (phosphoserine; by PKA). Disordered regions lie at residues 379–405 (RVTQ…QESR) and 424–493 (EDSS…QTSL). Basic and acidic residues predominate over residues 381–390 (TQRETERNRV). A Phosphothreonine; by PKA modification is found at Thr385. The segment covering 391–401 (TSENGATASGR) has biased composition (polar residues). At Ser430 the chain carries Phosphoserine. Positions 465-481 (NDPELQSDSSGPEEENQ) are enriched in acidic residues. The span at 482-491 (ELSLQEGEQT) shows a compositional bias: polar residues. Residues 530–707 (DGNNNLEDDS…PANDNAEEAP (178 aa)) are interaction with PRKAR1A, PRKAR2A and PRKAR2B. The interval 549 to 569 (WSLFDGFADGLGVAEAISYVD) is mediates interaction with TBC1D31. The RING-type; atypical zinc finger occupies 633-674 (CPICCSEYIKDDIATELPCHHFFHKPCVSIWLQKSGTCPVCR). Residues 685 to 701 (SAAASSDPDPDASPAND) are compositionally biased toward low complexity. A disordered region spans residues 685-707 (SAAASSDPDPDASPANDNAEEAP).

As to quaternary structure, binds ubiquitin-conjugating enzymes (E2s). In vitro, interacts with the ubiquitin-conjugating enzyme, UBE2D2. The phosphorylated form interacts with PRKAR1A, PRKAR2A and PRKAR2B. Binds the catalytic subunits of cAMP-dependent protein kinase. Interacts with MFHAS1. Interacts with TBC1D31; the interaction is direct and recruits PJA2 to centrosomes.

It is found in the cytoplasm. Its subcellular location is the cell membrane. The protein localises to the endoplasmic reticulum membrane. The protein resides in the golgi apparatus membrane. It localises to the synapse. It is found in the postsynaptic density. Its subcellular location is the cytoskeleton. The protein localises to the microtubule organizing center. The protein resides in the centrosome. It catalyses the reaction S-ubiquitinyl-[E2 ubiquitin-conjugating enzyme]-L-cysteine + [acceptor protein]-L-lysine = [E2 ubiquitin-conjugating enzyme]-L-cysteine + N(6)-ubiquitinyl-[acceptor protein]-L-lysine.. The protein operates within protein modification; protein ubiquitination. Has E2-dependent E3 ubiquitin-protein ligase activity. Responsible for ubiquitination of cAMP-dependent protein kinase type I and type II-alpha/beta regulatory subunits and for targeting them for proteasomal degradation. Essential for PKA-mediated long-term memory processes. Through the ubiquitination of MFHAS1, positively regulates the TLR2 signaling pathway that leads to the activation of the downstream p38 and JNK MAP kinases and promotes the polarization of macrophages toward the pro-inflammatory M1 phenotype. Plays a role in ciliogenesis by ubiquitinating OFD1. This chain is E3 ubiquitin-protein ligase Praja-2 (Pja2), found in Mus musculus (Mouse).